Reading from the N-terminus, the 268-residue chain is uncharacterized protein (268 aa).

The protein to M.tuberculosis Rv0025 and Rv0026.

This is an uncharacterized protein from Mycobacterium tuberculosis (strain CDC 1551 / Oshkosh).